The primary structure comprises 460 residues: Fumarate hydratase class II (460 aa).

Residues 95-97 (SGT), 126-129 (HPND), 136-138 (SSN), and Thr184 each bind substrate. The Proton donor/acceptor role is filled by His185. Ser315 is a catalytic residue. Substrate-binding positions include Ser316 and 321-323 (KVN).

It belongs to the class-II fumarase/aspartase family. Fumarase subfamily. Homotetramer.

It localises to the cytoplasm. The enzyme catalyses (S)-malate = fumarate + H2O. The protein operates within carbohydrate metabolism; tricarboxylic acid cycle; (S)-malate from fumarate: step 1/1. Functionally, involved in the TCA cycle. Catalyzes the stereospecific interconversion of fumarate to L-malate. This Chlamydia pneumoniae (Chlamydophila pneumoniae) protein is Fumarate hydratase class II.